The primary structure comprises 135 residues: Large ribosomal subunit protein uL18 (135 aa).

Residues 1-23 (MAQTQADTAARKPVGQSVSATRR) form a disordered region.

Belongs to the universal ribosomal protein uL18 family. As to quaternary structure, part of the 50S ribosomal subunit; part of the 5S rRNA/L5/L18/L25 subcomplex. Contacts the 5S and 23S rRNAs.

In terms of biological role, this is one of the proteins that bind and probably mediate the attachment of the 5S RNA into the large ribosomal subunit, where it forms part of the central protuberance. The chain is Large ribosomal subunit protein uL18 from Mycobacterium marinum (strain ATCC BAA-535 / M).